Consider the following 504-residue polypeptide: ATP synthase subunit beta (504 aa).

Residue 181-188 coordinates ATP; that stretch reads GGAGVGKT.

It belongs to the ATPase alpha/beta chains family. F-type ATPases have 2 components, CF(1) - the catalytic core - and CF(0) - the membrane proton channel. CF(1) has five subunits: alpha(3), beta(3), gamma(1), delta(1), epsilon(1). CF(0) has three main subunits: a(1), b(2) and c(9-12). The alpha and beta chains form an alternating ring which encloses part of the gamma chain. CF(1) is attached to CF(0) by a central stalk formed by the gamma and epsilon chains, while a peripheral stalk is formed by the delta and b chains.

The protein resides in the cell inner membrane. The catalysed reaction is ATP + H2O + 4 H(+)(in) = ADP + phosphate + 5 H(+)(out). Produces ATP from ADP in the presence of a proton gradient across the membrane. The catalytic sites are hosted primarily by the beta subunits. The sequence is that of ATP synthase subunit beta from Ehrlichia ruminantium (strain Welgevonden).